A 208-amino-acid chain; its full sequence is Small ribosomal subunit protein uS4 (208 aa).

The S4 RNA-binding domain maps to 98–159 (LRLDNVAYRL…AARTHIRIAA (62 aa)).

It belongs to the universal ribosomal protein uS4 family. In terms of assembly, part of the 30S ribosomal subunit. Contacts protein S5. The interaction surface between S4 and S5 is involved in control of translational fidelity.

Its function is as follows. One of the primary rRNA binding proteins, it binds directly to 16S rRNA where it nucleates assembly of the body of the 30S subunit. In terms of biological role, with S5 and S12 plays an important role in translational accuracy. In Acidithiobacillus ferrooxidans (strain ATCC 23270 / DSM 14882 / CIP 104768 / NCIMB 8455) (Ferrobacillus ferrooxidans (strain ATCC 23270)), this protein is Small ribosomal subunit protein uS4.